The primary structure comprises 181 residues: Oligoribonuclease (181 aa).

In terms of domain architecture, Exonuclease spans 8 to 171; it reads LIWIDLEMTG…DDIRESVAEL (164 aa). The active site involves Tyr129.

The protein belongs to the oligoribonuclease family.

The protein resides in the cytoplasm. 3'-to-5' exoribonuclease specific for small oligoribonucleotides. This Salmonella choleraesuis (strain SC-B67) protein is Oligoribonuclease.